The chain runs to 96 residues: Aspartyl/glutamyl-tRNA(Asn/Gln) amidotransferase subunit C (96 aa).

It belongs to the GatC family. Heterotrimer of A, B and C subunits.

It carries out the reaction L-glutamyl-tRNA(Gln) + L-glutamine + ATP + H2O = L-glutaminyl-tRNA(Gln) + L-glutamate + ADP + phosphate + H(+). It catalyses the reaction L-aspartyl-tRNA(Asn) + L-glutamine + ATP + H2O = L-asparaginyl-tRNA(Asn) + L-glutamate + ADP + phosphate + 2 H(+). Allows the formation of correctly charged Asn-tRNA(Asn) or Gln-tRNA(Gln) through the transamidation of misacylated Asp-tRNA(Asn) or Glu-tRNA(Gln) in organisms which lack either or both of asparaginyl-tRNA or glutaminyl-tRNA synthetases. The reaction takes place in the presence of glutamine and ATP through an activated phospho-Asp-tRNA(Asn) or phospho-Glu-tRNA(Gln). This is Aspartyl/glutamyl-tRNA(Asn/Gln) amidotransferase subunit C from Aliarcobacter butzleri (strain RM4018) (Arcobacter butzleri).